The chain runs to 364 residues: N-acetyl-gamma-glutamyl-phosphate reductase (364 aa).

Cys157 is a catalytic residue.

It belongs to the NAGSA dehydrogenase family. Type 1 subfamily.

The protein localises to the cytoplasm. The catalysed reaction is N-acetyl-L-glutamate 5-semialdehyde + phosphate + NADP(+) = N-acetyl-L-glutamyl 5-phosphate + NADPH + H(+). It functions in the pathway amino-acid biosynthesis; L-arginine biosynthesis; N(2)-acetyl-L-ornithine from L-glutamate: step 3/4. In terms of biological role, catalyzes the NADPH-dependent reduction of N-acetyl-5-glutamyl phosphate to yield N-acetyl-L-glutamate 5-semialdehyde. This is N-acetyl-gamma-glutamyl-phosphate reductase from Bifidobacterium longum (strain DJO10A).